We begin with the raw amino-acid sequence, 693 residues long: CREB-regulated transcription coactivator 2 (693 aa).

Residues 1-20 are compositionally biased toward polar residues; the sequence is MATSGANGPGSATASASNPR. Residues 1-30 are disordered; that stretch reads MATSGANGPGSATASASNPRKFSEKIALQK. A2 is modified (N-acetylalanine). R51 carries the post-translational modification Asymmetric dimethylarginine; by PRMT6. Phosphoserine occurs at positions 70, 86, and 90. 3 positions are modified to asymmetric dimethylarginine; by PRMT6: R99, R120, and R123. S136 bears the Phosphoserine mark. Residues R161 and R168 each carry the asymmetric dimethylarginine; by PRMT6 modification. T169 bears the Phosphothreonine mark. At S171 the chain carries Phosphoserine. Residues 174–188 show a composition bias toward polar residues; sequence ALHTSVMNPSPQDTY. The segment at 174 to 210 is disordered; the sequence is ALHTSVMNPSPQDTYPSPAAPSVLPSRRGGCLDGETD. The required for interaction with COP1 stretch occupies residues 209–215; sequence TDSKVPA. A Glycyl lysine isopeptide (Lys-Gly) (interchain with G-Cter in SUMO2) cross-link involves residue K234. Positions 271–287 match the Nuclear export signal motif; it reads TGGSLPDLTNLHFPPPL. Disordered regions lie at residues 271–307, 335–463, and 476–548; these read TGGS…GSST, HSPL…SPTL, and KLPT…QSYH. S274 is subject to Phosphoserine; by MARK2. At S306 the chain carries Phosphoserine. The segment covering 339-351 has biased composition (polar residues); that stretch reads SHPSFQSSLSNPN. Composition is skewed to low complexity over residues 352–378 and 386–424; these read LQAS…SSLA and SLGH…PGAS. A phosphoserine mark is found at S368, S393, S433, and S456. Positions 447 to 463 are enriched in polar residues; that stretch reads SQQQLPKQFSPTMSPTL. Phosphotyrosine is present on Y488. A phosphoserine mark is found at S489 and S492. A Phosphothreonine modification is found at T501. S613 and S624 each carry phosphoserine.

Belongs to the TORC family. As to quaternary structure, binds, as a tetramer, through its N-terminal region, with the bZIP domain of CREB1. 'Arg-314' in the bZIP domain of CREB1 is essential for this interaction. Interaction, via its C-terminal, with TAF4, enhances recruitment of TAF4 to CREB1. Interacts with SIK2. Interacts with 14-3-3 proteins, YWHAB and YWHAG. Interacts (probably when phosphorylated at Ser-171) with YWHAE. Interacts with calmodulin-dependent catalytic subunit PPP3CA/calcineurin A. Interaction with COP1 mediates nuclear export and degradation of CRTC2. In terms of processing, phosphorylation/dephosphorylation states of Ser-171 are required for regulating transduction of CREB activity. CRTCs/TORCs are inactive when phosphorylated, and active when dephosphorylated at this site. This primary site of phosphorylation, is regulated by cAMP and calcium levels and is dependent on the phosphorylation of SIKs (SIK1 and SIK2) by LKB1. Following adenylyl cyclase activation, dephosphorylated at Ser-171 by PPP3CA/calcineurin A resulting in CRTC2 dissociation from 14-3-3 proteins and PPP3CA. Both insulin and AMPK increase this phosphorylation of CRTC2 while glucagon suppresses it. Phosphorylation at Ser-274 by MARK2 is induced under low glucose conditions and dephosphorylated in response to glucose influx. Phosphorylation at Ser-274 promotes interaction with 14-3-3 proteins and translocation to the cytoplasm. Asymmetric dimethylation of arginine resisues by PRMT6 enhances the association of CRTC2 with CREB on the promoters of gluconeogenic genes.

Its subcellular location is the cytoplasm. The protein localises to the nucleus. Transcriptional coactivator for CREB1 which activates transcription through both consensus and variant cAMP response element (CRE) sites. Acts as a coactivator, in the SIK/TORC signaling pathway, being active when dephosphorylated and acts independently of CREB1 'Ser-133' phosphorylation. Enhances the interaction of CREB1 with TAF4. Regulates gluconeogenesis as a component of the LKB1/AMPK/TORC2 signaling pathway. Regulates the expression of specific genes such as the steroidogenic gene, StAR. Potent coactivator of PPARGC1A and inducer of mitochondrial biogenesis in muscle cells. This chain is CREB-regulated transcription coactivator 2 (CRTC2), found in Bos taurus (Bovine).